The sequence spans 158 residues: Transcription elongation factor GreA (158 aa).

This sequence belongs to the GreA/GreB family.

Necessary for efficient RNA polymerase transcription elongation past template-encoded arresting sites. The arresting sites in DNA have the property of trapping a certain fraction of elongating RNA polymerases that pass through, resulting in locked ternary complexes. Cleavage of the nascent transcript by cleavage factors such as GreA or GreB allows the resumption of elongation from the new 3'terminus. GreA releases sequences of 2 to 3 nucleotides. This Baumannia cicadellinicola subsp. Homalodisca coagulata protein is Transcription elongation factor GreA.